The chain runs to 105 residues: Phosphoribosyl-ATP pyrophosphatase (105 aa).

The protein belongs to the PRA-PH family.

It is found in the cytoplasm. It carries out the reaction 1-(5-phospho-beta-D-ribosyl)-ATP + H2O = 1-(5-phospho-beta-D-ribosyl)-5'-AMP + diphosphate + H(+). It functions in the pathway amino-acid biosynthesis; L-histidine biosynthesis; L-histidine from 5-phospho-alpha-D-ribose 1-diphosphate: step 2/9. The sequence is that of Phosphoribosyl-ATP pyrophosphatase from Methylococcus capsulatus (strain ATCC 33009 / NCIMB 11132 / Bath).